Reading from the N-terminus, the 147-residue chain is Calcium-regulated heat-stable protein 1 (147 aa).

Pro residues predominate over residues 1–12 (MSSEPPPPPQPP). The disordered stretch occupies residues 1-52 (MSSEPPPPPQPPTHQASVGLLDTPRSRERSPSPLRGNVVPSPLPTRRTRTFS). Residue S2 is modified to N-acetylserine. Phosphoserine is present on residues S30, S32, and S41. T45 carries the phosphothreonine modification. Phosphoserine occurs at positions 52 and 58. The CSD domain maps to 62–129 (VYKGVCKCFC…KLQAVEVVIT (68 aa)). Residues S146 and S147 each carry the phosphoserine modification.

As to quaternary structure, homodimer. Interacts with STYX. Dephosphorylated by calcineurin in a Ca(2+) dependent manner. Can be phosphorylated by DYRK2 (in vitro).

It is found in the cytoplasm. Its subcellular location is the P-body. The protein localises to the cytoplasmic granule. In terms of biological role, binds mRNA and regulates the stability of target mRNA. Binds single-stranded DNA (in vitro). This is Calcium-regulated heat-stable protein 1 (CARHSP1) from Homo sapiens (Human).